Here is a 612-residue protein sequence, read N- to C-terminus: Elongation factor 4 (612 aa).

One can recognise a tr-type G domain in the interval 11 to 193; that stretch reads KHIRNFAIVA…KVVKDIPAPS (183 aa). GTP-binding positions include 23 to 28 and 140 to 143; these read DHGKST and NKID.

It belongs to the TRAFAC class translation factor GTPase superfamily. Classic translation factor GTPase family. LepA subfamily.

It is found in the cell membrane. It carries out the reaction GTP + H2O = GDP + phosphate + H(+). Required for accurate and efficient protein synthesis under certain stress conditions. May act as a fidelity factor of the translation reaction, by catalyzing a one-codon backward translocation of tRNAs on improperly translocated ribosomes. Back-translocation proceeds from a post-translocation (POST) complex to a pre-translocation (PRE) complex, thus giving elongation factor G a second chance to translocate the tRNAs correctly. Binds to ribosomes in a GTP-dependent manner. The chain is Elongation factor 4 from Lactobacillus helveticus (strain DPC 4571).